The chain runs to 429 residues: Choline kinase A2 (429 aa).

ATP is bound by residues 82-88 (KGGMSNM), R111, 152-158 (EYIPSRP), and Q257. A substrate-binding site is contributed by 84-86 (GMS). Position 258 (E258) interacts with Ca(2+). Residue D301 participates in ATP binding. Ca(2+) is bound by residues E320 and I323.

This sequence belongs to the choline/ethanolamine kinase family. In terms of assembly, homodimer. A small proportion exists as higher oligomers. Mg(2+) is required as a cofactor.

The catalysed reaction is choline + ATP = phosphocholine + ADP + H(+). It carries out the reaction ethanolamine + ATP = phosphoethanolamine + ADP + H(+). It participates in phospholipid metabolism; phosphatidylcholine biosynthesis; phosphocholine from choline: step 1/1. Its pathway is phospholipid metabolism; phosphatidylethanolamine biosynthesis; phosphatidylethanolamine from ethanolamine: step 1/3. Its activity is regulated as follows. Inhibited by Ca(2+). Mild inhibition by high levels of Mg(2+)(&gt;10 mM). Catalyzes the first step in phosphatidylcholine biosynthesis. May contribute to phosphatidylethanolamine biosynthesis. Phosphorylates choline and ethanolamine but the activity is much higher with choline. The polypeptide is Choline kinase A2 (Caenorhabditis elegans).